Here is a 537-residue protein sequence, read N- to C-terminus: Chaperonin GroEL 2 (537 aa).

Residues 29–32 (TLGP), 86–90 (DGTTT), G413, 477–479 (NAA), and D493 contribute to the ATP site.

It belongs to the chaperonin (HSP60) family. In terms of assembly, forms a cylinder of 14 subunits composed of two heptameric rings stacked back-to-back. Interacts with the co-chaperonin GroES.

The protein localises to the cytoplasm. The catalysed reaction is ATP + H2O + a folded polypeptide = ADP + phosphate + an unfolded polypeptide.. Its function is as follows. Together with its co-chaperonin GroES, plays an essential role in assisting protein folding. The GroEL-GroES system forms a nano-cage that allows encapsulation of the non-native substrate proteins and provides a physical environment optimized to promote and accelerate protein folding. This chain is Chaperonin GroEL 2, found in Thermobifida fusca (strain YX).